The primary structure comprises 373 residues: NAD(P)H-quinone oxidoreductase subunit 1 (373 aa).

Helical transmembrane passes span 28–48, 98–118, 129–149, 167–187, 205–225, 267–287, 309–329, and 348–368; these read LLWL…GVLV, LLFT…WLII, VGVG…GLLM, AAQS…IVMM, ILSW…ICAL, VLSA…PIPV, SVGI…AILL, and FLLP…LAFP.

The protein belongs to the complex I subunit 1 family. As to quaternary structure, NDH-1 is composed of at least 11 different subunits.

It is found in the cellular thylakoid membrane. It catalyses the reaction a plastoquinone + NADH + (n+1) H(+)(in) = a plastoquinol + NAD(+) + n H(+)(out). It carries out the reaction a plastoquinone + NADPH + (n+1) H(+)(in) = a plastoquinol + NADP(+) + n H(+)(out). Functionally, NDH-1 shuttles electrons from an unknown electron donor, via FMN and iron-sulfur (Fe-S) centers, to quinones in the respiratory and/or the photosynthetic chain. The immediate electron acceptor for the enzyme in this species is believed to be plastoquinone. Couples the redox reaction to proton translocation, and thus conserves the redox energy in a proton gradient. In Parasynechococcus marenigrum (strain WH8102), this protein is NAD(P)H-quinone oxidoreductase subunit 1.